The sequence spans 843 residues: Taste receptor type 1 member 2 (843 aa).

Residues 1-19 (MGPQARTLHLLFLLLHALP) form the signal peptide. Residues 20 to 570 (KPVMLVGNSD…AFLEWHEVPT (551 aa)) are Extracellular-facing. Asn87, Asn296, Asn316, Asn355, Asn372, Asn432, Asn484, Asn491, and Asn531 each carry an N-linked (GlcNAc...) asparagine glycan. Residues 571–591 (IVVTILAALGFISTLAILLIF) form a helical membrane-spanning segment. Topologically, residues 592–606 (WRHFQTPMVRSAGGP) are cytoplasmic. Residues 607–627 (MCFLMLVPLLLAFGMVPVYVG) traverse the membrane as a helical segment. Over 628-642 (PPTVFSCFCRQAFFT) the chain is Extracellular. Residues 643-663 (VCFSVCLSCITVRSFQIVCVF) traverse the membrane as a helical segment. Residues 664–682 (KMARRLPSAYGFWMRYHGP) lie on the Cytoplasmic side of the membrane. The chain crosses the membrane as a helical span at residues 683–703 (YVFVAFITAVKVALVAGNMLA). Topologically, residues 704–731 (TTINPIGRTDPDDPNIIILSCHPNYRNG) are extracellular. The helical transmembrane segment at 732–752 (LLFNTSMDLLLSVLGFSFAYV) threads the bilayer. Over 753–764 (GKELPTNYNEAK) the chain is Cytoplasmic. Residues 765–785 (FITLSMTFSFTSSISLCTFMS) form a helical membrane-spanning segment. At 786-789 (VHDG) the chain is on the extracellular side. The chain crosses the membrane as a helical span at residues 790-810 (VLVTIMDLLVTVLNFLAIGLG). At 811–843 (YFGPKCYMILFYPERNTSAYFNSMIQGYTMRKS) the chain is on the cytoplasmic side.

This sequence belongs to the G-protein coupled receptor 3 family. TAS1R subfamily. In terms of assembly, forms heterodimers with TAS1R3. In terms of tissue distribution, expressed mainly in circumvallate and foliate taste papillae.

The protein resides in the cell membrane. Its function is as follows. Putative taste receptor. TAS1R2/TAS1R3 recognizes diverse natural and synthetic sweeteners. In Mus musculus (Mouse), this protein is Taste receptor type 1 member 2 (Tas1r2).